The primary structure comprises 720 residues: Denticleless protein homolog (720 aa).

WD repeat units lie at residues 43–85 (GMPV…TTKL), 92–131 (AHSNAVFDLAWVPGEHRIVTASGDQTAKVWDVRAGELLGI), and 134–174 (GHQC…KDGF). A DDB1-binding motif motif is present at residues 164-167 (WDTR). The short motif at 193-200 (PSKLRKKR) is the Nuclear localization signal element. 4 WD repeats span residues 211–250 (DFQQSVTVVLLQDEHTLISAGAVDGVIKVWDLRKNYAAYR), 266–305 (TRKLGYSSLVLDSTGANLFANCTDDSIYMFNMTSLKTFPV), 310–351 (GHQN…LPPR), and 355–395 (GHSQ…EEEK). A DDB1-binding motif motif is present at residues 240–243 (WDLR). Disordered regions lie at residues 411–437 (KPEEQRGAGRSASPQSTPAKAFSVGSP), 476–495 (PAKLSGASPRTSPKLVPSSK), 528–552 (QSLLETSSTPKAQHSQAEKRAKRRL), and 607–698 (NEHE…TSPK). Positions 528–542 (QSLLETSSTPKAQHS) are enriched in polar residues. Basic and acidic residues-rich tracts occupy residues 543 to 552 (QAEKRAKRRL) and 642 to 660 (CERDSDVVDKENSSPERKN).

The protein belongs to the WD repeat cdt2 family. In terms of assembly, component of the DCX(DTL) E3 ubiquitin ligase complex, at least composed of CUL4 (CUL4A or CUL4B), DDB1, DTL/CDT2 and RBX1.

Its subcellular location is the nucleus. It is found in the cytoplasm. It localises to the cytoskeleton. The protein localises to the microtubule organizing center. The protein resides in the centrosome. Its subcellular location is the chromosome. It functions in the pathway protein modification; protein ubiquitination. Its function is as follows. Substrate-specific adapter of a DCX (DDB1-CUL4-X-box) E3 ubiquitin-protein ligase complex required for cell cycle control, DNA damage response and translesion DNA synthesis. The DCX(DTL) complex, also named CRL4(CDT2) complex, mediates the polyubiquitination and subsequent degradation of CDT1, CDKN1A/p21(CIP1), KMT5A and SDE2. CDT1 degradation in response to DNA damage is necessary to ensure proper cell cycle regulation of DNA replication. CDKN1A/p21(CIP1) degradation during S phase or following UV irradiation is essential to control replication licensing. KMT5A degradation is also important for a proper regulation of mechanisms such as TGF-beta signaling, cell cycle progression, DNA repair and cell migration. Most substrates require their interaction with PCNA for their polyubiquitination: substrates interact with PCNA via their PIP-box, and those containing the 'K+4' motif in the PIP box, recruit the DCX(DTL) complex, leading to their degradation. In undamaged proliferating cells, the DCX(DTL) complex also promotes the 'Lys-164' monoubiquitination of PCNA, thereby being involved in PCNA-dependent translesion DNA synthesis. May play a role in the regulation of the circadian clock. In Gallus gallus (Chicken), this protein is Denticleless protein homolog (DTL).